Here is a 473-residue protein sequence, read N- to C-terminus: Glycogen synthase (473 aa).

Position 15 (Lys15) interacts with ADP-alpha-D-glucose.

The protein belongs to the glycosyltransferase 1 family. Bacterial/plant glycogen synthase subfamily.

The catalysed reaction is [(1-&gt;4)-alpha-D-glucosyl](n) + ADP-alpha-D-glucose = [(1-&gt;4)-alpha-D-glucosyl](n+1) + ADP + H(+). It functions in the pathway glycan biosynthesis; glycogen biosynthesis. Functionally, synthesizes alpha-1,4-glucan chains using ADP-glucose. This chain is Glycogen synthase, found in Flavobacterium johnsoniae (strain ATCC 17061 / DSM 2064 / JCM 8514 / BCRC 14874 / CCUG 350202 / NBRC 14942 / NCIMB 11054 / UW101) (Cytophaga johnsonae).